We begin with the raw amino-acid sequence, 778 residues long: Ribonucleoside-diphosphate reductase large subunit (778 aa).

Residues serine 177, serine 192–cysteine 193, glycine 221, asparagine 419–glutamate 423, and proline 613–serine 617 each bind substrate. Cysteine 193 and cysteine 439 are disulfide-bonded. The active-site Proton acceptor is the asparagine 419. Residue cysteine 421 is the Cysteine radical intermediate of the active site. The active-site Proton acceptor is the glutamate 423.

This sequence belongs to the ribonucleoside diphosphate reductase large chain family. In terms of assembly, heterotetramer composed of a homodimer of the large subunit (R1) and a homodimer of the small subunit (R2). Larger multisubunit protein complex are also active, composed of (R1)n(R2)n.

The enzyme catalyses a 2'-deoxyribonucleoside 5'-diphosphate + [thioredoxin]-disulfide + H2O = a ribonucleoside 5'-diphosphate + [thioredoxin]-dithiol. Its activity is regulated as follows. Under complex allosteric control mediated by deoxynucleoside triphosphates and ATP binding. The type of nucleotide bound at the specificity site determines substrate preference. It seems probable that ATP makes the enzyme reduce CDP and UDP, dGTP favors ADP reduction and dTTP favors GDP reduction. Its function is as follows. Ribonucleoside-diphosphate reductase holoenzyme provides the precursors necessary for viral DNA synthesis. Allows virus growth in non-dividing cells. Catalyzes the biosynthesis of deoxyribonucleotides from the corresponding ribonucleotides. In African swine fever virus (isolate Tick/South Africa/Pretoriuskop Pr4/1996) (ASFV), this protein is Ribonucleoside-diphosphate reductase large subunit.